We begin with the raw amino-acid sequence, 251 residues long: Flap endonuclease Xni (251 aa).

Aspartate 104 contacts Mg(2+). Residues 160-249 (VLPRQLPDYW…IDGNLQQLRL (90 aa)) enclose the 5'-3' exonuclease domain. K(+)-binding residues include leucine 171, alanine 172, proline 180, valine 182, and isoleucine 185. Positions 184–189 (GIGPKS) are interaction with DNA.

The protein belongs to the Xni family. It depends on Mg(2+) as a cofactor. K(+) serves as cofactor.

Functionally, has flap endonuclease activity. During DNA replication, flap endonucleases cleave the 5'-overhanging flap structure that is generated by displacement synthesis when DNA polymerase encounters the 5'-end of a downstream Okazaki fragment. The sequence is that of Flap endonuclease Xni from Salmonella newport (strain SL254).